A 332-amino-acid polypeptide reads, in one-letter code: Probable farnesyl diphosphate synthase (332 aa).

3 residues coordinate isopentenyl diphosphate: lysine 75, arginine 78, and histidine 107. Mg(2+)-binding residues include aspartate 114 and aspartate 120. Arginine 125 contacts (2E)-geranyl diphosphate. An isopentenyl diphosphate-binding site is contributed by arginine 126. Lysine 208, serine 209, glutamine 250, and lysine 267 together coordinate (2E)-geranyl diphosphate.

This sequence belongs to the FPP/GGPP synthase family. Mg(2+) is required as a cofactor.

Its subcellular location is the cytoplasm. The catalysed reaction is isopentenyl diphosphate + (2E)-geranyl diphosphate = (2E,6E)-farnesyl diphosphate + diphosphate. The sequence is that of Probable farnesyl diphosphate synthase (fppS) from Bradyrhizobium diazoefficiens (strain JCM 10833 / BCRC 13528 / IAM 13628 / NBRC 14792 / USDA 110).